We begin with the raw amino-acid sequence, 125 residues long: MAGGVGGRVVVGRHVYGNLYGCDARVLGDEAALITIVKEAVRVANAMLLSIGSYRFGPNGGLTVFAVVAESHISIHTWPEHGFATVDVYTCGDHTDPKAAFDFIVEKLSPKKIEVFYGDRSMYSE.

The Schiff-base intermediate with substrate; via pyruvic acid role is filled by S71. At S71 the chain carries Pyruvic acid (Ser); by autocatalysis. The Proton acceptor; for processing activity role is filled by H76. C91 (proton donor; for catalytic activity) is an active-site residue.

This sequence belongs to the prokaryotic AdoMetDC family. Type 1 subfamily. In terms of assembly, heterotetramer of two alpha and two beta chains arranged as a dimer of alpha/beta heterodimers. The cofactor is pyruvate. Is synthesized initially as an inactive proenzyme. Formation of the active enzyme involves a self-maturation process in which the active site pyruvoyl group is generated from an internal serine residue via an autocatalytic post-translational modification. Two non-identical subunits are generated from the proenzyme in this reaction, and the pyruvate is formed at the N-terminus of the alpha chain, which is derived from the carboxyl end of the proenzyme. The post-translation cleavage follows an unusual pathway, termed non-hydrolytic serinolysis, in which the side chain hydroxyl group of the serine supplies its oxygen atom to form the C-terminus of the beta chain, while the remainder of the serine residue undergoes an oxidative deamination to produce ammonia and the pyruvoyl group blocking the N-terminus of the alpha chain.

The catalysed reaction is S-adenosyl-L-methionine + H(+) = S-adenosyl 3-(methylsulfanyl)propylamine + CO2. It functions in the pathway amine and polyamine biosynthesis; S-adenosylmethioninamine biosynthesis; S-adenosylmethioninamine from S-adenosyl-L-methionine: step 1/1. Functionally, catalyzes the decarboxylation of S-adenosylmethionine to S-adenosylmethioninamine (dcAdoMet), the propylamine donor required for the synthesis of the polyamines spermine and spermidine from the diamine putrescine. The sequence is that of S-adenosylmethionine decarboxylase proenzyme from Pyrobaculum arsenaticum (strain DSM 13514 / JCM 11321 / PZ6).